Consider the following 482-residue polypeptide: Alanine aminotransferase 2 (482 aa).

The residue at position 299 (Lys299) is an N6-(pyridoxal phosphate)lysine.

This sequence belongs to the class-I pyridoxal-phosphate-dependent aminotransferase family. Alanine aminotransferase subfamily. Homodimer. The cofactor is pyridoxal 5'-phosphate. The N-terminus is blocked. As to expression, mesophyll and bundle sheath cells.

The enzyme catalyses L-alanine + 2-oxoglutarate = pyruvate + L-glutamate. It participates in photosynthesis; C4 acid pathway. The protein operates within amino-acid degradation; L-alanine degradation via transaminase pathway; pyruvate from L-alanine: step 1/1. Its function is as follows. Transfer of C3 units between the cytosol of mesophyll and bundle sheath cells to maintain a nitrogen-carbon balance in the C4-dicarboxylic pathway. The sequence is that of Alanine aminotransferase 2 from Panicum miliaceum (Proso millet).